The primary structure comprises 121 residues: Acidic phospholipase A2 PLA-1 (121 aa).

Disulfide bonds link Cys-26–Cys-115, Cys-28–Cys-44, Cys-43–Cys-95, Cys-49–Cys-121, Cys-50–Cys-88, Cys-57–Cys-81, and Cys-75–Cys-86. Residues Tyr-27, Gly-29, and Gly-31 each coordinate Ca(2+). His-47 is a catalytic residue. Asp-48 provides a ligand contact to Ca(2+). Asp-89 is an active-site residue.

The protein belongs to the phospholipase A2 family. Group II subfamily. D49 sub-subfamily. Ca(2+) is required as a cofactor. As to expression, expressed by the venom gland.

It localises to the secreted. It carries out the reaction a 1,2-diacyl-sn-glycero-3-phosphocholine + H2O = a 1-acyl-sn-glycero-3-phosphocholine + a fatty acid + H(+). In terms of biological role, PLA2 catalyzes the calcium-dependent hydrolysis of the 2-acyl groups in 3-sn-phosphoglycerides. This chain is Acidic phospholipase A2 PLA-1, found in Eristicophis macmahoni (Leaf-nosed viper).